The following is a 563-amino-acid chain: Solute carrier family 22 member 1 (563 aa).

The Cytoplasmic segment spans residues 1 to 21; that stretch reads MLTVDDVLEQVGEFGWFQKQT. The chain crosses the membrane as a helical span at residues 22–42; that stretch reads FLILCLLSAAFAPIYVGIVFL. Over 43–144 the chain is Extracellular; the sequence is AFTPDHRCRS…LVCDDSWKVD (102 aa). N-linked (GlcNAc...) asparagine glycosylation occurs at asparagine 71. The chain crosses the membrane as a helical span at residues 145-165; that stretch reads LFQSCVNLGFFLGSLGVGYIA. Residues 166–171 are Cytoplasmic-facing; the sequence is DRFGRK. The chain crosses the membrane as a helical span at residues 172 to 192; that stretch reads VCLLATTLTCASLGVLTAVAP. The Extracellular segment spans residues 193–196; it reads DYTS. The chain crosses the membrane as a helical span at residues 197-219; the sequence is LLIFRLLQGLVSKGSWTAGYTLI. Residues 220 to 232 lie on the Cytoplasmic side of the membrane; that stretch reads TEFVGLGYRRTVA. A helical transmembrane segment spans residues 233–253; the sequence is ILYQMAFTVGLVLLSGLAYIL. Residues 254–257 are Extracellular-facing; the sequence is PHWR. The helical transmembrane segment at 258-278 threads the bilayer; the sequence is WLQLAVSLPIFLLLFRFWFVP. The Proline-rich sequence signature appears at 278–282; that stretch reads PESPR. Residues 279 to 342 lie on the Cytoplasmic side of the membrane; it reads ESPRWLLSQK…FRTPNLRKYT (64 aa). Serine 328 is subject to Phosphoserine. Residues 343–363 form a helical membrane-spanning segment; sequence FILMYLWFTSSVVYQGLIMHV. Over 364–371 the chain is Extracellular; that stretch reads GATGGNLY. The helical transmembrane segment at 372-392 threads the bilayer; that stretch reads LDFLYSALVEFPAGFIILVTI. Over 393-398 the chain is Cytoplasmic; that stretch reads DRFGRR. Residues 399–418 form a helical membrane-spanning segment; that stretch reads YPLATSNLAAGLACFLMIFI. The Extracellular portion of the chain corresponds to 419–423; sequence PHDLP. The helical transmembrane segment at 424–446 threads the bilayer; it reads WLNIMVACVGRMGITIVFQMVCL. Over 447 to 459 the chain is Cytoplasmic; that stretch reads VNAELFPTFIRNL. A helical transmembrane segment spans residues 460-480; that stretch reads GMMVCSSLCDLGGVLTPFLVF. Topologically, residues 481–487 are extracellular; the sequence is RLMEVWQ. Residues 488–508 traverse the membrane as a helical segment; sequence GSPLILFAALGLVAGGMTLLL. Residues 509–563 lie on the Cytoplasmic side of the membrane; that stretch reads PETKGVTLPETIEDAENLQRKAKPKENKIYLQVQTSELNTQAAERDASQGTAQQK.

This sequence belongs to the major facilitator (TC 2.A.1) superfamily. Organic cation transporter (TC 2.A.1.19) family. In terms of processing, phosphorylated.

It localises to the basolateral cell membrane. It is found in the apical cell membrane. The protein localises to the lateral cell membrane. The protein resides in the basal cell membrane. Its subcellular location is the cell membrane. It catalyses the reaction 1-methylnicotinamide(out) = 1-methylnicotinamide(in). It carries out the reaction dopamine(out) = dopamine(in). The enzyme catalyses serotonin(out) = serotonin(in). The catalysed reaction is (R)-adrenaline(out) = (R)-adrenaline(in). It catalyses the reaction (R)-noradrenaline(out) = (R)-noradrenaline(in). It carries out the reaction histamine(out) = histamine(in). The enzyme catalyses guanidine(out) = guanidine(in). The catalysed reaction is choline(out) = choline(in). It catalyses the reaction acetylcholine(in) = acetylcholine(out). It carries out the reaction thiamine(in) = thiamine(out). The enzyme catalyses spermidine(in) = spermidine(out). The catalysed reaction is agmatine(out) = agmatine(in). It catalyses the reaction putrescine(out) = putrescine(in). It carries out the reaction (R)-carnitine(in) = (R)-carnitine(out). The enzyme catalyses O-isobutanoyl-(R)-carnitine(in) = O-isobutanoyl-(R)-carnitine(out). The catalysed reaction is O-acetyl-(R)-carnitine(in) = O-acetyl-(R)-carnitine(out). It catalyses the reaction O-3-hydroxybutanoyl-(R)-carnitine(in) = O-3-hydroxybutanoyl-(R)-carnitine(out). It carries out the reaction O-propanoyl-(R)-carnitine(in) = O-propanoyl-(R)-carnitine(out). The enzyme catalyses O-butanoyl-(R)-carnitine(in) = O-butanoyl-(R)-carnitine(out). The catalysed reaction is O-2-methylbutanoyl-(R)-carnitine(in) = O-2-methylbutanoyl-(R)-carnitine(out). It catalyses the reaction O-3-methylbutanoyl-(R)-carnitine(in) = O-3-methylbutanoyl-(R)-carnitine(out). It carries out the reaction O-hexanoyl-(R)-carnitine(in) = O-hexanoyl-(R)-carnitine(out). The enzyme catalyses L-histidyl-L-proline diketopiperazine(in) = L-histidyl-L-proline diketopiperazine(out). The catalysed reaction is (R)-salsolinol(in) = (R)-salsolinol(out). It catalyses the reaction prostaglandin F2alpha(out) = prostaglandin F2alpha(in). It carries out the reaction prostaglandin E2(out) = prostaglandin E2(in). Its activity is regulated as follows. Phosphorylation of the transporter leads to changes in its substrate affinity, resulting in a regulation of the transport activity. In contrast with rat ortholog, ASP uptake is inhibited by protein kinase A (PKA) and C (PKC) activation. ASP uptake is also endogenously activated by calmodulin, the calmodulin-dependent kinase II and LCK tyrosine kinase. Inhibited by cGMP, most likely through a cGMP-binding protein that interacts with OCT1. Its function is as follows. Electrogenic voltage-dependent transporter that mediates the transport of a variety of organic cations such as endogenous bioactive amines, cationic drugs and xenobiotics. Functions as a pH- and Na(+)-independent, bidirectional transporter. Cation cellular uptake or release is driven by the electrochemical potential (i.e. membrane potential and concentration gradient) and substrate selectivity. Hydrophobicity is a major requirement for recognition in polyvalent substrates and inhibitors. Primarily expressed in the basolateral membrane of hepatocytes and proximal tubules and involved in the uptake and disposition of cationic compounds from the blood by hepatic and renal clearance. Most likely functions as an uptake carrier in enterocytes contributing to the intestinal elimination of organic cations from the systemic circulation. Transports endogenous monoamines such as N-1-methylnicotinamide (NMN), guanidine, neurotransmitters dopamine, serotonin, noradrenaline, adrenaline and histamine, and quaternary ammonium compound such as choline. Also transports natural polyamines such as spermidine, agmatine and putrescine at low affinity, but relatively high turnover. Involved in the hepatic and intestinal uptake of the vitamin B1/thiamine, hence regulating hepatic lipid and energy metabolism. Contributes to the influx and efflux of fatty acid carriers carnitines and acylcarnitines across the basolateral membrane of hepatocytes, from the liver to the systemic circulation and inversely and may be involved in regulating the systemic availability of hepatic acylcarnitines. Also capable of transporting non-amine endogenous compounds such as prostaglandin E2 (PGE2) and prostaglandin F2-alpha (PGF2-alpha). May contribute to the transport of cationic compounds in testes across the blood-testis-barrier. Also mediates the uptake of xenobiotics tributylmethylammonium (TBuMA), quinidine, N-methyl-quinine (NMQ), N-methyl-quinidine (NMQD) N-(4,4-azo-n-pentyl)-quinuclidine (APQ), azidoprocainamide methoiodide (AMP), N-(4,4-azo-n-pentyl)-21-deoxyajmalinium (APDA) and 4-(4-(dimethylamino)styryl)-N-methylpyridinium (ASP). The chain is Solute carrier family 22 member 1 (SLC22A1) from Bos taurus (Bovine).